A 148-amino-acid chain; its full sequence is Large ribosomal subunit protein bL9 (148 aa).

This sequence belongs to the bacterial ribosomal protein bL9 family.

In terms of biological role, binds to the 23S rRNA. This is Large ribosomal subunit protein bL9 from Thermus thermophilus.